Here is a 564-residue protein sequence, read N- to C-terminus: Dihydroxy-acid dehydratase (564 aa).

C51 contributes to the [2Fe-2S] cluster binding site. Residue D83 participates in Mg(2+) binding. C124 serves as a coordination point for [2Fe-2S] cluster. Mg(2+) contacts are provided by D125 and K126. An N6-carboxylysine modification is found at K126. C196 contributes to the [2Fe-2S] cluster binding site. E448 is a Mg(2+) binding site. S474 acts as the Proton acceptor in catalysis.

The protein belongs to the IlvD/Edd family. In terms of assembly, homodimer. [2Fe-2S] cluster is required as a cofactor. Requires Mg(2+) as cofactor.

It carries out the reaction (2R)-2,3-dihydroxy-3-methylbutanoate = 3-methyl-2-oxobutanoate + H2O. The catalysed reaction is (2R,3R)-2,3-dihydroxy-3-methylpentanoate = (S)-3-methyl-2-oxopentanoate + H2O. It functions in the pathway amino-acid biosynthesis; L-isoleucine biosynthesis; L-isoleucine from 2-oxobutanoate: step 3/4. Its pathway is amino-acid biosynthesis; L-valine biosynthesis; L-valine from pyruvate: step 3/4. Its function is as follows. Functions in the biosynthesis of branched-chain amino acids. Catalyzes the dehydration of (2R,3R)-2,3-dihydroxy-3-methylpentanoate (2,3-dihydroxy-3-methylvalerate) into 2-oxo-3-methylpentanoate (2-oxo-3-methylvalerate) and of (2R)-2,3-dihydroxy-3-methylbutanoate (2,3-dihydroxyisovalerate) into 2-oxo-3-methylbutanoate (2-oxoisovalerate), the penultimate precursor to L-isoleucine and L-valine, respectively. This is Dihydroxy-acid dehydratase from Pyrobaculum calidifontis (strain DSM 21063 / JCM 11548 / VA1).